Here is an 833-residue protein sequence, read N- to C-terminus: Leucine--tRNA ligase (833 aa).

The short motif at 41-52 (PYPSGAGLHVGH) is the 'HIGH' region element. The 'KMSKS' region signature appears at 610-614 (KMSKS). ATP is bound at residue lysine 613.

The protein belongs to the class-I aminoacyl-tRNA synthetase family.

It localises to the cytoplasm. The enzyme catalyses tRNA(Leu) + L-leucine + ATP = L-leucyl-tRNA(Leu) + AMP + diphosphate. This is Leucine--tRNA ligase from Streptococcus pneumoniae serotype 19F (strain G54).